Consider the following 443-residue polypeptide: Chromosomal replication initiator protein DnaA (443 aa).

A domain I, interacts with DnaA modulators region spans residues 1–67; the sequence is MDAWSRSLER…RELLAHFAGF (67 aa). Residues 67–105 are domain II; it reads FSDVFLEIGSRPRPVEAQNAPFSTPSAHVSSEPQVPFAG. Residues 106 to 323 form a domain III, AAA+ region region; that stretch reads NLDNHYTFAN…GALNTLTARA (218 aa). ATP is bound by residues Gly-151, Gly-153, Lys-154, and Thr-155. The tract at residues 324–443 is domain IV, binds dsDNA; sequence NFTGRAITTE…WDKLIRKLSE (120 aa).

Belongs to the DnaA family. Oligomerizes as a right-handed, spiral filament on DNA at oriC.

It is found in the cytoplasm. Plays an essential role in the initiation and regulation of chromosomal replication. ATP-DnaA binds to the origin of replication (oriC) to initiate formation of the DNA replication initiation complex once per cell cycle. Binds the DnaA box (a 9 base pair repeat at the origin) and separates the double-stranded (ds)DNA. Forms a right-handed helical filament on oriC DNA; dsDNA binds to the exterior of the filament while single-stranded (ss)DNA is stabiized in the filament's interior. The ATP-DnaA-oriC complex binds and stabilizes one strand of the AT-rich DNA unwinding element (DUE), permitting loading of DNA polymerase. After initiation quickly degrades to an ADP-DnaA complex that is not apt for DNA replication. Binds acidic phospholipids. The polypeptide is Chromosomal replication initiator protein DnaA (Stenotrophomonas maltophilia (strain R551-3)).